Reading from the N-terminus, the 257-residue chain is Cyclin-C1-1 (257 aa).

This sequence belongs to the cyclin family. Cyclin C subfamily.

The protein is Cyclin-C1-1 of Oryza sativa subsp. japonica (Rice).